The primary structure comprises 767 residues: MSGDHLHNDSQIEADFRLNDSHKHKDKHKDREHRHKEHKKDKDKDREKSKHSNSEHKDSEKKHKEKEKTKHKDGSSDKHKDKHKDRDKEKRKEEKIRAAGDAKIKKEKENGFSSPPRIKDEPEDDGYFAPPKEDIKPLKRPRDEDDADYKPKKIKTEDIKKEKKRKLEEEEDGKLKKPKNKDKDKKVAEPDNKKKKAKKEEEQKWKWWEEERYPEGIKWKFLEHKGPVFAPPYEPLPEGVKFYYDGKVMKLSPKAEEVATFFAKMLDHEYTTKEIFRKNFFKDWRKEMTNDEKNTITNLSKCDFTQMSQYFKAQSEARKQMSKEEKLKIKEENEKLLKEYGFCVMDNHRERIANFKIEPPGLFRGRGNHPKMGMLKRRIMPEDIIINCSKDAKVPSPPPGHKWKEVRHDNKVTWLVSWTENIQGSIKYIMLNPSSRIKGEKDWQKYETARRLKKCVDKIRNQYREDWKSKEMKVRQRAVALYFIDKLALRAGNEKEEGETADTVGCCSLRVEHINLHPELDGQEYVVEFDFPGKDSIRYYNKVPVEKRVFKNLQLFMENKQPEDDLFDRLNTGILNKHLQDLMEGLTAKVFRTYNASITLQQQLKELTAPDENVPAKILSYNRANRAVAILCNHQRAPPKTFEKSMMNLQSKIDAKKDQLADARKDLKSAKADAKVMKDAKTKKVVESKKKAVQRLEEQLMKLEVQATDREENKQIALGTSKLNYLDPRITVAWCKKWGVPIEKIYNKTQREKFAWAIDMTDEDYEF.

The segment covering 1–23 (MSGDHLHNDSQIEADFRLNDSHK) has biased composition (basic and acidic residues). The interval 1–200 (MSGDHLHNDS…DNKKKKAKKE (200 aa)) is disordered. At serine 2 the chain carries N-acetylserine. Phosphoserine is present on residues serine 2 and serine 10. A compositionally biased stretch (basic residues) spans 24–39 (HKDKHKDREHRHKEHK). Residues 40-110 (KDKDKDREKS…DAKIKKEKEN (71 aa)) are compositionally biased toward basic and acidic residues. Serine 59 carries the phosphoserine modification. Lysine 103 is covalently cross-linked (Glycyl lysine isopeptide (Lys-Gly) (interchain with G-Cter in SUMO2)). A Glycyl lysine isopeptide (Lys-Gly) (interchain with G-Cter in SUMO); alternate cross-link involves residue lysine 105. Lysine 105 is covalently cross-linked (Glycyl lysine isopeptide (Lys-Gly) (interchain with G-Cter in SUMO2); alternate). Serine 114 bears the Phosphoserine mark. Lysine 119 participates in a covalent cross-link: Glycyl lysine isopeptide (Lys-Gly) (interchain with G-Cter in SUMO); alternate. A Glycyl lysine isopeptide (Lys-Gly) (interchain with G-Cter in SUMO2); alternate cross-link involves residue lysine 119. Residue lysine 119 forms a Glycyl lysine isopeptide (Lys-Gly) (interchain with G-Cter in SUMO1); alternate linkage. The segment covering 131–168 (PKEDIKPLKRPRDEDDADYKPKKIKTEDIKKEKKRKLE) has biased composition (basic and acidic residues). Residues lysine 136 and lysine 150 each participate in a glycyl lysine isopeptide (Lys-Gly) (interchain with G-Cter in SUMO2) cross-link. Lysine 155 is covalently cross-linked (Glycyl lysine isopeptide (Lys-Gly) (interchain with G-Cter in SUMO); alternate). Residue lysine 155 forms a Glycyl lysine isopeptide (Lys-Gly) (interchain with G-Cter in SUMO2); alternate linkage. Residues lysine 160 and lysine 166 each participate in a glycyl lysine isopeptide (Lys-Gly) (interchain with G-Cter in SUMO2) cross-link. Lysine 174 participates in a covalent cross-link: Glycyl lysine isopeptide (Lys-Gly) (interchain with G-Cter in SUMO2); alternate. Lysine 174 carries the post-translational modification N6-acetyllysine; alternate. A compositionally biased stretch (basic and acidic residues) spans 181 to 200 (KDKDKKVAEPDNKKKKAKKE). A Glycyl lysine isopeptide (Lys-Gly) (interchain with G-Cter in SUMO2) cross-link involves residue lysine 206. Lysine 282 carries the N6-acetyllysine modification. Lysine 338 is covalently cross-linked (Glycyl lysine isopeptide (Lys-Gly) (interchain with G-Cter in SUMO2)). Interaction with DNA regions lie at residues 427-428 (KY) and 490-495 (RAGNEK). The region spanning 434 to 767 (SSRIKGEKDW…IDMTDEDYEF (334 aa)) is the Topo IB-type catalytic domain. Serine 508 is subject to Phosphoserine; by CK2. Lysine 551 is covalently cross-linked (Glycyl lysine isopeptide (Lys-Gly) (interchain with G-Cter in SUMO2)). Residues 587-589 (TAK) are interaction with DNA. Glycyl lysine isopeptide (Lys-Gly) (interchain with G-Cter in SUMO2) cross-links involve residues lysine 644, lysine 702, and lysine 714. Tyrosine 725 acts as the O-(3'-phospho-DNA)-tyrosine intermediate in catalysis.

This sequence belongs to the type IB topoisomerase family. As to quaternary structure, monomer. Interacts with ERCC6. Interacts with TPRN; TPRN interacts with a number of DNA damage response proteins, is recruited to sites of DNA damage and may play a role in DNA damage repair. Post-translationally, sumoylated. Lys-119 is the main site of sumoylation. Sumoylation plays a role in partitioning TOP1 between nucleoli and nucleoplasm. Levels are dramatically increased on camptothecin (CPT) treatment. Phosphorylation at Ser-508 by CK2 increases binding to supercoiled DNA and sensitivity to camptothecin.

The protein localises to the nucleus. It is found in the nucleolus. It localises to the nucleoplasm. It carries out the reaction ATP-independent breakage of single-stranded DNA, followed by passage and rejoining.. Functionally, releases the supercoiling and torsional tension of DNA introduced during the DNA replication and transcription by transiently cleaving and rejoining one strand of the DNA duplex. Introduces a single-strand break via transesterification at a target site in duplex DNA. The scissile phosphodiester is attacked by the catalytic tyrosine of the enzyme, resulting in the formation of a DNA-(3'-phosphotyrosyl)-enzyme intermediate and the expulsion of a 5'-OH DNA strand. The free DNA strand then rotates around the intact phosphodiester bond on the opposing strand, thus removing DNA supercoils. Finally, in the religation step, the DNA 5'-OH attacks the covalent intermediate to expel the active-site tyrosine and restore the DNA phosphodiester backbone. Regulates the alternative splicing of tissue factor (F3) pre-mRNA in endothelial cells. Involved in the circadian transcription of the core circadian clock component BMAL1 by altering the chromatin structure around the ROR response elements (ROREs) on the BMAL1 promoter. The polypeptide is DNA topoisomerase 1 (Top1) (Rattus norvegicus (Rat)).